Here is a 98-residue protein sequence, read N- to C-terminus: MHGDTPTLHEYMLDLQPETTDLYCYEQLNDSSEEEDEIDGPAGQAEPDRAHYNIVTFCCKCDSTLRLCVQSTHVDIRTLEDLLMGTLGIVCPICSQKP.

The tract at residues M1 to G40 is E7 terminal domain. An LXCXE motif; interaction with host RB1 and TMEM173/STING motif is present at residues L22–E26. A zinc finger spans residues C58–C94. Positions I76–M84 match the Nuclear export signal motif.

The protein belongs to the papillomaviridae E7 protein family. In terms of assembly, homodimer. Homooligomer. Interacts with host RB1; this interaction induces dissociation of RB1-E2F1 complex thereby disrupting RB1 activity. Interacts with host EP300; this interaction represses EP300 transcriptional activity. Forms a complex with CHD4 and HDAC1, thereby altering the action of host histone deacetylation. A similar complex involving E7, CHD4 and HDAC2 may also form. Interacts with protein E2; this interaction inhibits E7 oncogenic activity. In terms of processing, highly phosphorylated.

The protein resides in the host cytoplasm. The protein localises to the host nucleus. Its function is as follows. Plays a role in viral genome replication by driving entry of quiescent cells into the cell cycle. Stimulation of progression from G1 to S phase allows the virus to efficiently use the cellular DNA replicating machinery to achieve viral genome replication. E7 protein has both transforming and trans-activating activities. Induces the disassembly of the E2F1 transcription factor from RB1, with subsequent transcriptional activation of E2F1-regulated S-phase genes. Interferes with host histone deacetylation mediated by HDAC1 and HDAC2, leading to transcription activation. Also plays a role in the inhibition of both antiviral and antiproliferative functions of host interferon alpha. Interaction with host TMEM173/STING impairs the ability of TMEM173/STING to sense cytosolic DNA and promote the production of type I interferon (IFN-alpha and IFN-beta). The polypeptide is Protein E7 (Human papillomavirus type 16).